Consider the following 310-residue polypeptide: Oxygen-dependent coproporphyrinogen-III oxidase (310 aa).

Residue Ser-97 coordinates substrate. 2 residues coordinate a divalent metal cation: His-101 and His-111. The active-site Proton donor is the His-111. 113 to 115 (NFR) serves as a coordination point for substrate. A divalent metal cation-binding residues include His-150 and His-180. Residues 245-280 (YVEFNLLYDRGTRFGLEFGGRTESILMSLPPRVVWR) are important for dimerization. 263–265 (GGR) is a substrate binding site.

This sequence belongs to the aerobic coproporphyrinogen-III oxidase family. As to quaternary structure, homodimer. Requires a divalent metal cation as cofactor.

The protein localises to the cytoplasm. The catalysed reaction is coproporphyrinogen III + O2 + 2 H(+) = protoporphyrinogen IX + 2 CO2 + 2 H2O. The protein operates within porphyrin-containing compound metabolism; protoporphyrin-IX biosynthesis; protoporphyrinogen-IX from coproporphyrinogen-III (O2 route): step 1/1. In terms of biological role, involved in the heme biosynthesis. Catalyzes the aerobic oxidative decarboxylation of propionate groups of rings A and B of coproporphyrinogen-III to yield the vinyl groups in protoporphyrinogen-IX. The sequence is that of Oxygen-dependent coproporphyrinogen-III oxidase from Coxiella burnetii (strain RSA 331 / Henzerling II).